A 221-amino-acid chain; its full sequence is Pleckstrin homology domain-containing family B member 2 (221 aa).

One can recognise a PH domain in the interval 2 to 109; sequence AFVKSGWLLR…WKFTLQDSRT (108 aa). K20 is a binding site for a 1,2-diacyl-sn-glycero-3-phospho-L-serine.

Highly expressed in brain, retina, heart and kidney. Detected at lower levels in lung, muscle and nerve.

It localises to the recycling endosome membrane. Its function is as follows. Involved in retrograde transport of recycling endosomes. This Mus musculus (Mouse) protein is Pleckstrin homology domain-containing family B member 2 (Plekhb2).